We begin with the raw amino-acid sequence, 862 residues long: Ubiquitin carboxyl-terminal hydrolase 13 (862 aa).

The UBP-type; degenerate zinc-finger motif lies at 182-290 (QASKHAKSLV…KHLAHFGIDM (109 aa)). Positions 206, 209, 226, and 239 each coordinate Zn(2+). The USP domain maps to 331 to 860 (TGMKNLGNSC…LGYIYFYHRI (530 aa)). The active-site Nucleophile is Cys-340. UBA domains follow at residues 647-688 (DIDE…IIAH) and 722-762 (QPPE…IFSH). The Proton acceptor role is filled by His-822.

It belongs to the peptidase C19 family.

It catalyses the reaction Thiol-dependent hydrolysis of ester, thioester, amide, peptide and isopeptide bonds formed by the C-terminal Gly of ubiquitin (a 76-residue protein attached to proteins as an intracellular targeting signal).. Its activity is regulated as follows. Specifically inhibited by spautin-1 (specific and potent autophagy inhibitor-1), a derivative of MBCQ that binds to USP13 and inhibits deubiquitinase activity. Functionally, deubiquitinase that mediates deubiquitination of target proteins and is involved in various processes such as autophagy and endoplasmic reticulum-associated degradation (ERAD). The chain is Ubiquitin carboxyl-terminal hydrolase 13 (USP13) from Gallus gallus (Chicken).